A 135-amino-acid polypeptide reads, in one-letter code: uncharacterized protein (135 aa).

This is an uncharacterized protein from Schizosaccharomyces pombe (strain 972 / ATCC 24843) (Fission yeast).